A 304-amino-acid polypeptide reads, in one-letter code: UDP-N-acetylenolpyruvoylglucosamine reductase (304 aa).

The 166-residue stretch at 31-196 folds into the FAD-binding PCMH-type domain; that stretch reads KVGGPADYLA…ISAKFNLKPG (166 aa). The active site involves arginine 175. The active-site Proton donor is serine 225. Residue glutamate 295 is part of the active site.

It belongs to the MurB family. FAD serves as cofactor.

It is found in the cytoplasm. It catalyses the reaction UDP-N-acetyl-alpha-D-muramate + NADP(+) = UDP-N-acetyl-3-O-(1-carboxyvinyl)-alpha-D-glucosamine + NADPH + H(+). It participates in cell wall biogenesis; peptidoglycan biosynthesis. Functionally, cell wall formation. The sequence is that of UDP-N-acetylenolpyruvoylglucosamine reductase from Streptococcus thermophilus (strain CNRZ 1066).